A 948-amino-acid chain; its full sequence is MAQQYQPGQRWISDSEAELGLGTVLAQDGRLLTVLYPATGETRQYALRNAPLTRVRFSPGDSITHFEGWKMTVQQVDDVDGLMVYHGLNAQNEAVTLPETQLSNFIQFRLASDRLFAGQIDPLAWFSLRYHTLEHTSRQLQSALWGLGGVRAQPIAHQLHIAREVADRIAPRVLLADEVGLGKTIEAGLVIHRQLLSGRANRVLILVPENLQHQWLVEMRRRFNLQVALFDEERFIESDATNPFEDTQLALVALEWLVDDEKAQDALFAAGWDLMVVDEAHHLVWHEDKVSPEYSLVEQLAEVIPGVLLLTATPEQLGQDSHFARLRLLDPNRFHDLAAFRAESENYRPVAEAVQELLDKGRLSPAAHKTIHGFLGNEGEALLTAVNDGDTEASARLVRELLDRHGTGRVLFRNTRAAVQGFPERKLHPYPLPCPDEYLELPLGEHAELYPEVSFQAQPDASEEERWWKFDPRVEWLIDQLKMLKRTKVLVICAHAETAMDLEDALRVRSGIPATVFHEGMNILERDRAAAYFADEEFGAQVLICSEIGSEGRNFQFAHHLVLFDLPSHPDLLEQRIGRLDRIGQKHIIELHVPYLETSPQERLFQWYHEALNAFLNTCPTGNALQHQFGPRLLPLLEEADDGEWQALIDEARTERERLEAELHTGRDRLLELNSGGAGEGEALVEAILEQDDQFALPIYMETLFDAFGIDSEDHSENALILKPSEKMLDASFPLGDDEGVTITYDRNQALSREDMQFITWEHPMVQGGMDLVLSGSMGNTAVALIKNKALKPGTVLLELLYVSEVVAPRSLQLGRYLPPAALRCLLDANGNDLSSRVAFETLNDQLESVPRASANKFIQAQRDQLTPRINAGEDKVTPRHAERVAEARRRLAADTDEELARLTALQAVNPTVRDSELDALRKQREQGLAMLDKAALRLEAIRVLVAG.

The Helicase ATP-binding domain occupies 164–332 (EVADRIAPRV…FARLRLLDPN (169 aa)). Position 177–184 (177–184 (DEVGLGKT)) interacts with ATP. The short motif at 278–281 (DEAH) is the DEAH box element. A Helicase C-terminal domain is found at 473–627 (RVEWLIDQLK…TCPTGNALQH (155 aa)).

It belongs to the SNF2/RAD54 helicase family. RapA subfamily. Interacts with the RNAP. Has a higher affinity for the core RNAP than for the holoenzyme. Its ATPase activity is stimulated by binding to RNAP.

Transcription regulator that activates transcription by stimulating RNA polymerase (RNAP) recycling in case of stress conditions such as supercoiled DNA or high salt concentrations. Probably acts by releasing the RNAP, when it is trapped or immobilized on tightly supercoiled DNA. Does not activate transcription on linear DNA. Probably not involved in DNA repair. The polypeptide is RNA polymerase-associated protein RapA (Pseudomonas fluorescens (strain Pf0-1)).